Here is an 85-residue protein sequence, read N- to C-terminus: Small ribosomal subunit protein bS20 (85 aa).

The tract at residues 1–22 is disordered; sequence MPQIKSAIKRVKTQNATNKRNA. Over residues 13-22 the composition is skewed to polar residues; that stretch reads TQNATNKRNA.

Belongs to the bacterial ribosomal protein bS20 family.

Functionally, binds directly to 16S ribosomal RNA. The sequence is that of Small ribosomal subunit protein bS20 from Lactobacillus acidophilus (strain ATCC 700396 / NCK56 / N2 / NCFM).